We begin with the raw amino-acid sequence, 212 residues long: MELRNTKLEQLFYIYHRNLKYRCPMQYLTKRGFNLQDLLSVGGGLAYLGEKQWLNLSLYNFNNQLVGFLSRKVGFEKKFLYLPINKPPSKSESFLGLKHLPTETNTIYLVEGDFDWLAFRKGGILNCLPLCGLTLSDKQMKFFQQSKIEKVVLCLDNDFAGKVAAANLERILKNAGFQVKVVQLKGKVKDWNELLLLYPKNWAKALRDHLAL.

Residues 105–187 (NTIYLVEGDF…QVKVVQLKGK (83 aa)) form the Toprim domain.

This is an uncharacterized protein from Mycoplasma pneumoniae (strain ATCC 29342 / M129 / Subtype 1) (Mycoplasmoides pneumoniae).